A 459-amino-acid polypeptide reads, in one-letter code: Prenyltransferase penI (459 aa).

Residues 107 to 108 (VV) and glutamate 111 contribute to the L-tryptophan site. Residues arginine 126, arginine 276, lysine 278, tyrosine 280, and tyrosine 384 each contribute to the substrate site.

Belongs to the tryptophan dimethylallyltransferase family.

The enzyme catalyses quinolinone B + dimethylallyl diphosphate = peniprequinolone + diphosphate. It functions in the pathway secondary metabolite biosynthesis. The protein operates within alkaloid biosynthesis. Its pathway is mycotoxin biosynthesis. In terms of biological role, prenyltransferase; part of the gene cluster that mediates the biosynthesis of penigequinolones, potent insecticidal alkaloids that contain a highly modified 10-carbon prenyl group. The first stage is catalyzed by the nonribosomal peptide synthetase penN that condenses anthranilic acid and O-methyl-L-tyrosine to produce 4'-methoxycyclopeptin. 4'-methoxycyclopeptin is then converted to 4'-methoxydehydrocyclopeptin by the ketoglutarate-dependent dioxygenase penM through dehydrogenation to form a double bond between C-alpha and C-beta of the O-methyltyrosine side chain. PenM also converts its first product methoxydehydrocyclopeptin to 4'-methoxycyclopenin. The following conversion of 4'methoxycyclopenin into 4'-methoxyviridicatin is catalyzed by the cyclopenase penL. 4'-methoxyviridicatin is the precursor of quinolone natural products, and is further converted to quinolinone B. The prenyltransferase penI then catalyzes the canonical Friedel-Crafts alkylation of quinolinone B with dimethylallyl cation to yield dimethylallyl quinolone, which is subjected to FAD-dependent dehydrogenation by the FAD-linked oxidoreductase penH to yield conjugated aryl diene. The delta(3') double bond then serves as the site of the second alkylation with DMAPP catalyzed by the prenyltransferase penG to yield a carbenium ion intermediate, which can be attacked by H(2)O to yield a styrenyl quinolone containing a C3'-hydroxyprenyl chain, or undergo cyclization to yield yaequinolones J1 and J2. The conversion of the styrenyl quinolone into the tetrahydrofuran-containing yaequinolone C is performed by the FAD-dependent monooxygenase penE and involves epoxidation of the terminal C7'-C8' olefin, followed by epoxide ring opening initiated by the C3' hydroxyl group. The predicted cysteine hydrolase penJ acts as an epoxide hydrolase that enhances the rate of the 5-exo-tet cyclization step, increasing the yield of yaequinolone C. PenF catalyzes the cationic rearrangement of the epoxide formed by penE (before ring opening to produce yaequinolone C) into yaequinolone D. Finally, the short-chain dehydrogenase/reductase (SDR)-like reductase penD, catalyzes both the dehydration of yaequinolone D and the reduction of the resulting oxonium to yield penigequinolone. The chain is Prenyltransferase penI from Penicillium thymicola.